A 776-amino-acid chain; its full sequence is K(+) efflux antiporter 3, chloroplastic (776 aa).

The transit peptide at 1–72 (MAISTMLGSI…KVFLDTSKRF (72 aa)) directs the protein to the chloroplast. Residues 73–93 (YFQGRWSESSGRRVETYAGVD) are Lumenal, thylakoid-facing. A helical transmembrane segment spans residues 94 to 114 (VASAVDVINDLGFDTLTFLMV). Thr115 is a topological domain (stromal). The chain crosses the membrane as a helical span at residues 116-136 (VIIVPAFRILKASPILGFFFA). The Lumenal, thylakoid portion of the chain corresponds to 137-153 (GVVLNQFGLIRNLTDVK). A helical transmembrane segment spans residues 154–174 (VLSEWGILFLLFEMGLELSLA). The Stromal segment spans residues 175-181 (RLKALAK). A helical membrane pass occupies residues 182-202 (FAFGMGLTQVLLCTAAFTAFE). Residues 203–232 (LPPNGAIGTKILEFLFHSRPDLVNIRSIDE) lie on the Lumenal, thylakoid side of the membrane. A helical transmembrane segment spans residues 233-253 (AVVIGAALSLSSSAFVLQLLA). Residues 254-266 (EKGELPTRFGSAT) are Stromal-facing. The chain crosses the membrane as a helical span at residues 267 to 287 (LGILLLQDIAVVPLLVILPVL). Residues 288–296 (ESQDIGGES) are Lumenal, thylakoid-facing. Residues 297 to 317 (IWPMLAKESAKALGGLGILSL) form a helical membrane-spanning segment. Residues 318–338 (GGKFFLRRIFEVVAETRSSEA) are Stromal-facing. The helical transmembrane segment at 339–359 (FVALCLLTVAGTSLVTQWLGF) threads the bilayer. Over 360–389 (SDTLGAFLAGALLAETNFRTQIEADIRPFR) the chain is Lumenal, thylakoid. The helical transmembrane segment at 390-410 (GLLLGLFFVTTGTSIDMEVLF) threads the bilayer. At 411-415 (REWPN) the chain is on the stromal side. Residues 416–436 (VLSLLGGLIVIKTLIITAIGP) traverse the membrane as a helical segment. Over 437-445 (RVGLTIQES) the chain is Lumenal, thylakoid. A helical transmembrane segment spans residues 446-466 (VRVGFLLSQGGEFAFVVFSLA). Over 467–468 (NR) the chain is Stromal. The chain crosses the membrane as a helical span at residues 469–489 (LGVLPNELNKLLIIVVVLSMA). Over 490-526 (LTPYLNQLGRKAADFLDERLDPGEKIGEDVNFDVSES) the chain is Lumenal, thylakoid. One can recognise an RCK N-terminal domain in the interval 524 to 649 (SESIVIIGFG…KKAGATDAIL (126 aa)). A helical transmembrane segment spans residues 527–547 (IVIIGFGQMGQVLANFLSTPL). Topologically, residues 548–776 (VSDSDLVGWP…FVGKADKAQD (229 aa)) are stromal. The disordered stretch occupies residues 728-776 (MQMKASDSNSDSAAEILQETAGLSQPPEIDDSSVNIDNGFVGKADKAQD).

The protein belongs to the monovalent cation:proton antiporter 2 (CPA2) transporter (TC 2.A.37) family. KEA (TC 2.A.37.1) subfamily. In terms of tissue distribution, expressed at low levels in flowers, siliques and leaves. As to expression, expressed at low levels in flowers and leaves. Most abundant splice form in all organs, including siliques, flowers, leaves and roots. Preferentially expressed in photosynthetically active tissues, including seedling cotyledons and mature leaves. In terms of tissue distribution, expressed in shoots and roots.

It is found in the plastid. It localises to the chloroplast membrane. The protein resides in the golgi apparatus membrane. Its subcellular location is the chloroplast thylakoid membrane. It catalyses the reaction K(+)(in) + H(+)(out) = K(+)(out) + H(+)(in). With respect to regulation, regulated by a mechanism involving lumenal C-terminus region; a fine-tuned balance between photoprotective energy dissipation in high light and a maximum quantum yield in low light involves a reduced activity under high light. In terms of biological role, electroneutral K(+)/H(+) efflux antiporter assuring proton efflux from the thylakoid lumen to the plastid stroma, thus increasing the membrane potential at the expense of the proton gradient (delta pH) component of the proton motive force (PMF). Promotes photosynthesis and growth in conditions where the chloroplast (cp)ATP synthase activity is low (e.g. cgl160 mutant background) by reducing the pH gradient across the thylakoid membrane. Accelerates photosynthetic acclimation in fluctuating light environments by modulating two components of the proton motive force, the proton gradient and the electric potential (delta Psi). Promotes the relaxation of photoprotective energy-dependent non-photochemical quenching (NPQ) after transitions from high to low light, thus enhancing photosystem II (PSII) quantum efficiency in fluctuating light. On transition from high to low light, slows down photoprotection by dissipating the pH gradient across the thylakoid membrane. During photosynthetic response on transition from dark to low light, involved in a sequential mechanism of adaptation; VCCN1 and CLCe first trigger the activation of photoprotection, which is later down-regulated by KEA3 to a low steady state, while adjusting electron transport. Together with the chloroplast NADH dehydrogenase-like (NDH) complex, maximizes photosynthesis efficiency after a long dark adaptation. Required in roots for rapid hyperosmotic-induced Ca(2+) responses and for osmo-sensory potentiation in hyperosmotic conditions. Low K(+)/H(+) efflux antiporter activity. Functionally, low K(+)/H(+) efflux antiporter activity. Promotes non-photochemical quenching (NPQ) in high light conditions. This Arabidopsis thaliana (Mouse-ear cress) protein is K(+) efflux antiporter 3, chloroplastic.